We begin with the raw amino-acid sequence, 557 residues long: ETHYLENE INSENSITIVE 3-like 5 protein (557 aa).

2 disordered regions span residues 1-23 (MVEV…DLEE) and 61-96 (NLNS…RKKM). The segment covering 64 to 82 (SVISSPSSSTSASSSSSSS) has biased composition (low complexity). Residues 270-311 (ERVRRLARQSKCLQDKMMAKETDTWSRVLNQEEARLNRLKIS) adopt a coiled-coil conformation.

It belongs to the EIN3 family.

Its subcellular location is the nucleus. Its function is as follows. Putative transcription factor that may be involved in the ethylene response pathway. The protein is ETHYLENE INSENSITIVE 3-like 5 protein (EIL5) of Arabidopsis thaliana (Mouse-ear cress).